The primary structure comprises 148 residues: Meiosis inducing protein mei3 (148 aa).

Residues M1–P20 are compositionally biased toward polar residues. The segment at M1–E96 is disordered. Residues N21 to K46 show a composition bias toward low complexity. The segment covering P75–P86 has biased composition (basic residues).

Functionally, acts as a critical meiotic inducer by binding non-covalently to protein kinase ran1/pat1 inhibiting its enzymatic activity. Inhibits ran1/pat1 by acting as a pseudosubstrate for ran1/pat1 instead of its natural substrate ste11. Inactivation of the ran1/pat1 protein kinase is both necessary and sufficient to divert a vegetative cell from mitotic division to meiotic differentiation. This Schizosaccharomyces pombe (strain 972 / ATCC 24843) (Fission yeast) protein is Meiosis inducing protein mei3.